The primary structure comprises 509 residues: Bifunctional purine biosynthesis protein PurH (509 aa).

Positions 1-144 constitute an MGS-like domain; the sequence is MKRALLSVSD…KNARDVIVVV (144 aa).

The protein belongs to the PurH family.

It carries out the reaction (6R)-10-formyltetrahydrofolate + 5-amino-1-(5-phospho-beta-D-ribosyl)imidazole-4-carboxamide = 5-formamido-1-(5-phospho-D-ribosyl)imidazole-4-carboxamide + (6S)-5,6,7,8-tetrahydrofolate. The catalysed reaction is IMP + H2O = 5-formamido-1-(5-phospho-D-ribosyl)imidazole-4-carboxamide. It functions in the pathway purine metabolism; IMP biosynthesis via de novo pathway; 5-formamido-1-(5-phospho-D-ribosyl)imidazole-4-carboxamide from 5-amino-1-(5-phospho-D-ribosyl)imidazole-4-carboxamide (10-formyl THF route): step 1/1. Its pathway is purine metabolism; IMP biosynthesis via de novo pathway; IMP from 5-formamido-1-(5-phospho-D-ribosyl)imidazole-4-carboxamide: step 1/1. This Oenococcus oeni (strain ATCC BAA-331 / PSU-1) protein is Bifunctional purine biosynthesis protein PurH.